The following is a 150-amino-acid chain: Ribonuclease K6 (150 aa).

Positions 1-23 are cleaved as a signal peptide; the sequence is MVLCFPLLLLLLVLWGPVCLLHA. His38 (proton acceptor) is an active-site residue. 4 cysteine pairs are disulfide-bonded: Cys46–Cys104, Cys60–Cys114, Cys78–Cys129, and Cys85–Cys92. A glycan (N-linked (GlcNAc...) asparagine) is linked at Asn55. Substrate contacts are provided by residues 61–65 and Lys86; that span reads KHQNT. Residue Asn100 is glycosylated (N-linked (GlcNAc...) asparagine). Arg105 contacts substrate. The active-site Proton donor is His145.

Belongs to the pancreatic ribonuclease family. In terms of assembly, interacts (via N-terminus) with bacterial lipopolysaccharide (LPS).

The protein resides in the secreted. Its subcellular location is the lysosome. The protein localises to the cytoplasmic granule. Ribonuclease which shows a preference for the pyrimidines uridine and cytosine. Has potent antibacterial activity against a range of Gram-positive and Gram-negative bacteria, including P.aeruginosa, A.baumanii, M.luteus, S.aureus, E.faecalis, E.faecium, S.saprophyticus and E.coli. Causes loss of bacterial membrane integrity, and also promotes agglutination of Gram-negative bacteria. Probably contributes to urinary tract sterility. Bactericidal activity is independent of RNase activity. The sequence is that of Ribonuclease K6 (RNASE6) from Macaca mulatta (Rhesus macaque).